A 30-amino-acid polypeptide reads, in one-letter code: NADH-ubiquinone oxidoreductase chain 5 (30 aa).

The chain crosses the membrane as a helical span at residues 7 to 27; that stretch reads NIIIIINSSLIIILFSSIFFF.

It belongs to the complex I subunit 5 family.

The protein resides in the mitochondrion inner membrane. It catalyses the reaction a ubiquinone + NADH + 5 H(+)(in) = a ubiquinol + NAD(+) + 4 H(+)(out). In terms of biological role, core subunit of the mitochondrial membrane respiratory chain NADH dehydrogenase (Complex I) that is believed to belong to the minimal assembly required for catalysis. Complex I functions in the transfer of electrons from NADH to the respiratory chain. The immediate electron acceptor for the enzyme is believed to be ubiquinone. The chain is NADH-ubiquinone oxidoreductase chain 5 (ND5) from Pisaster ochraceus (Ochre sea star).